A 112-amino-acid chain; its full sequence is uncharacterized protein (112 aa).

Positions 70–112 are disordered; sequence GLYRGRRPPGRDAARPTTAILFAQGRPPLLDQRAPTRRGSHQR.

This is an uncharacterized protein from Homo sapiens (Human).